We begin with the raw amino-acid sequence, 261 residues long: Guanine nucleotide exchange factor BopE (261 aa).

Residues 241-253 (RRAAQDASRDEKG) show a composition bias toward basic and acidic residues. Residues 241–261 (RRAAQDASRDEKGAANAADGA) form a disordered region.

The protein belongs to the GEF (guanine exchange factor) SopE family. In terms of assembly, monomer. Interacts with human CDC42.

Its subcellular location is the secreted. Functionally, activator for both CDC42 and RAC1 by directly interacting with these Rho GTPases and acting as a guanine nucleotide exchange factor (GEF). This activation results in actin cytoskeleton rearrangements and stimulates membrane ruffling, thus promoting bacterial entry into non-phagocytic cells. The sequence is that of Guanine nucleotide exchange factor BopE (bopE) from Burkholderia thailandensis (strain ATCC 700388 / DSM 13276 / CCUG 48851 / CIP 106301 / E264).